The sequence spans 167 residues: MIPYQEWHSQLQSLYDSQIFHNWALCQDVHLNDEKDGLLLRLIPTRQLQKNTERIENKLLNHIELYLTYSKVYNEPLLLLRIWEEKSIDGIPMTKLMLPTDIESLLDVQGKFQLGLDTIINLEGSVWYSFHPCDTSCIVGDQAEFMSTYLRRWVSIFIFSWLGYEDS.

C133 serves as the catalytic Glycyl thioester intermediate.

It belongs to the ATG10 family. In terms of assembly, forms homooligomers. Interacts with ATG7 and ATG12.

It is found in the preautophagosomal structure membrane. Functionally, E2-like enzyme required for the cytoplasm to vacuole transport (Cvt), autophagy and nucleophagy. Acts as an E2-like enzyme that catalyzes the conjugation of ATG12 to ATG5. ATG12 conjugation to ATG5 is required for proper localization of ATG8 to the preautophagosomal structure (PAS). Likely serves as an ATG5-recognition molecule. This is Ubiquitin-like-conjugating enzyme ATG10 (ATG10) from Saccharomyces cerevisiae (strain ATCC 204508 / S288c) (Baker's yeast).